Reading from the N-terminus, the 89-residue chain is Small ribosomal subunit protein uS15 (89 aa).

Belongs to the universal ribosomal protein uS15 family. In terms of assembly, part of the 30S ribosomal subunit. Forms a bridge to the 50S subunit in the 70S ribosome, contacting the 23S rRNA.

Its function is as follows. One of the primary rRNA binding proteins, it binds directly to 16S rRNA where it helps nucleate assembly of the platform of the 30S subunit by binding and bridging several RNA helices of the 16S rRNA. In terms of biological role, forms an intersubunit bridge (bridge B4) with the 23S rRNA of the 50S subunit in the ribosome. This Shewanella sediminis (strain HAW-EB3) protein is Small ribosomal subunit protein uS15.